A 177-amino-acid polypeptide reads, in one-letter code: Adenine phosphoribosyltransferase (177 aa).

Belongs to the purine/pyrimidine phosphoribosyltransferase family. Homodimer.

It localises to the cytoplasm. The catalysed reaction is AMP + diphosphate = 5-phospho-alpha-D-ribose 1-diphosphate + adenine. The protein operates within purine metabolism; AMP biosynthesis via salvage pathway; AMP from adenine: step 1/1. Catalyzes a salvage reaction resulting in the formation of AMP, that is energically less costly than de novo synthesis. This chain is Adenine phosphoribosyltransferase, found in Chlorobium phaeovibrioides (strain DSM 265 / 1930) (Prosthecochloris vibrioformis (strain DSM 265)).